We begin with the raw amino-acid sequence, 457 residues long: Serine/threonine-protein phosphatase 2A regulatory subunit B'' subunit gamma (457 aa).

EF-hand domains are found at residues 276-311 and 344-379; these read PSAL…TLTS and KEPA…IQEQ. Ca(2+)-binding residues include Asp-289, Asp-291, Asn-293, Met-295, and Glu-300.

The protein resides in the nucleus. It localises to the cytoplasm. In terms of biological role, possible role in the regulation of cell death. The polypeptide is Serine/threonine-protein phosphatase 2A regulatory subunit B'' subunit gamma (ppp2r3c) (Danio rerio (Zebrafish)).